The primary structure comprises 285 residues: Methionine aminopeptidase 2 (285 aa).

Substrate is bound at residue H114. D131, D142, and H205 together coordinate a divalent metal cation. H212 contacts substrate. A divalent metal cation is bound by residues E238 and E269.

In terms of assembly, monomer. Co(2+) is required as a cofactor. The cofactor is Zn(2+). Mn(2+) serves as cofactor. Requires Fe(2+) as cofactor.

The enzyme catalyses Release of N-terminal amino acids, preferentially methionine, from peptides and arylamides.. With respect to regulation, inhibited by bengamide derivatives and by various metalloform-selective inhibitors. Functionally, removes the N-terminal methionine from nascent proteins. The N-terminal methionine is often cleaved when the second residue in the primary sequence is small and uncharged (Met-Ala-, Cys, Gly, Pro, Ser, Thr, or Val). Requires deformylation of the N(alpha)-formylated initiator methionine before it can be hydrolyzed. The protein is Methionine aminopeptidase 2 of Mycobacterium tuberculosis (strain ATCC 25618 / H37Rv).